Consider the following 1129-residue polypeptide: Kinesin-like protein KIP1 (1129 aa).

A disordered region spans residues 1-49 (MLEQAEKLMKRNSSGAMSAPQSKPLARSRSSTMPTTTQKRVRSSQQSEG). Composition is skewed to polar residues over residues 11–21 (RNSSGAMSAPQ) and 28–48 (SRSS…QQSE). The region spanning 54–417 (NIKVYVRCRS…LEYATRAKSI (364 aa)) is the Kinesin motor domain. An ATP-binding site is contributed by 139–146 (GQTGTGKT). Coiled coils occupy residues 422-513 (QVNQ…ELDV), 681-765 (LEKE…QKIV), and 919-948 (DDQR…TLVN).

Belongs to the TRAFAC class myosin-kinesin ATPase superfamily. Kinesin family. BimC subfamily.

Its subcellular location is the cytoplasm. It is found in the cytoskeleton. The protein localises to the spindle. Required for assembly of the mitotic spindle. Interacts with spindle microtubules to produce an outwardly directed force acting upon the poles. Following spindle assembly, CIN8 and KIP1 apparently act to oppose a force that draws separated poles back together. This force seems to be mediate by KAR3. In Eremothecium gossypii (strain ATCC 10895 / CBS 109.51 / FGSC 9923 / NRRL Y-1056) (Yeast), this protein is Kinesin-like protein KIP1 (KIP1).